The sequence spans 292 residues: Aquaporin-3 (292 aa).

Over 1 to 24 (MGRQKELVNRCGEMLHIRYRLLRQ) the chain is Cytoplasmic. A helical transmembrane segment spans residues 25–42 (ALAECLGTLILVMFGCGS). Residues 43 to 56 (VAQVVLSRGTHGGF) are Extracellular-facing. The chain crosses the membrane as a helical span at residues 57–74 (LTINLAFGFAVTLGILIA). Residues 75 to 78 (GQVS) lie on the Cytoplasmic side of the membrane. The segment at residues 79-92 (GAHLNPAVTFAMCF) is an intramembrane region (discontinuously helical). An NPA 1 motif is present at residues 83-85 (NPA). Over 93–100 (LAREPWIK) the chain is Cytoplasmic. The chain crosses the membrane as a helical span at residues 101 to 121 (LPVYTLAQTLGAFLGAGIIFG). Residues 122–159 (LYYDAIWAFANNQLIVSGPNGTAGIFATYPSGHLDMVN) lie on the Extracellular side of the membrane. A glycan (N-linked (GlcNAc...) asparagine) is linked at N141. Residues 160-177 (GFFDQFIGTASLIVCVLA) traverse the membrane as a helical segment. Topologically, residues 178-189 (IVDPYNNPVPRG) are cytoplasmic. Residues 190–206 (LEAFTVGLVVLVIGTSM) form a helical membrane-spanning segment. Residues 207 to 210 (GFNS) are Extracellular-facing. The segment at residues 211–224 (GYAVNPARDFGPRL) is an intramembrane region (discontinuously helical). The short motif at 215–217 (NPA) is the NPA 2 element. The Extracellular segment spans residues 225–242 (FTAIAGWGSEVFTTGRHW). A helical membrane pass occupies residues 243-264 (WWVPIVSPLLGSIAGVFVYQLM). Over 265-292 (IGCHLEPPPPSTDEENVKLSHVKHKEQM) the chain is Cytoplasmic.

It belongs to the MIP/aquaporin (TC 1.A.8) family. As to quaternary structure, homotetramer; each monomer provides an independent glycerol/water pore. Could also exist in other oligomeric states.

It localises to the cell membrane. The protein resides in the basolateral cell membrane. The catalysed reaction is glycerol(in) = glycerol(out). The enzyme catalyses H2O(in) = H2O(out). It carries out the reaction urea(in) = urea(out). It catalyses the reaction H2O2(out) = H2O2(in). Its function is as follows. Aquaglyceroporins form homotetrameric transmembrane channels, with each monomer independently mediating glycerol and water transport across the plasma membrane along their osmotic gradient. Could also be permeable to urea. Also participates in cell permeability to H2O2 and H2O2-mediated signaling. In skin, transports glycerol to the epidermis and stratum corneum, where it maintains hydration, elasticity, and supports lipid biosynthesis for barrier repair. In kidney, contributes to the reabsorption of water, helping the body maintain proper fluid balance. The sequence is that of Aquaporin-3 from Bos taurus (Bovine).